Here is a 170-residue protein sequence, read N- to C-terminus: Adenine phosphoribosyltransferase (170 aa).

This sequence belongs to the purine/pyrimidine phosphoribosyltransferase family. Homodimer.

It localises to the cytoplasm. The enzyme catalyses AMP + diphosphate = 5-phospho-alpha-D-ribose 1-diphosphate + adenine. It participates in purine metabolism; AMP biosynthesis via salvage pathway; AMP from adenine: step 1/1. Its function is as follows. Catalyzes a salvage reaction resulting in the formation of AMP, that is energically less costly than de novo synthesis. The polypeptide is Adenine phosphoribosyltransferase (Clostridioides difficile (strain 630) (Peptoclostridium difficile)).